The sequence spans 163 residues: MMMLRQTSRKAYLGLQASPLGLGRRLYHENVIDHFENPRNVGSFNRNDPNVGTGLVGAPACGDLMSLQIKVDDSGQIIDTRFKTFGCGSAIASSSVASEWIKGKTLDEVMTIKNAEIAKHLRLPPVKLHCSMLAEDAIKSAVRDYKEKQAKTNAAAAEETVKA.

A mitochondrion-targeting transit peptide spans 1-48 (MMMLRQTSRKAYLGLQASPLGLGRRLYHENVIDHFENPRNVGSFNRND).

Belongs to the NifU family. In terms of assembly, component of the core Fe-S cluster (ISC) assembly machinery. [2Fe-2S] cluster is required as a cofactor. In terms of tissue distribution, mostly expressed in leaves, pollen and flowers.

It is found in the mitochondrion matrix. It participates in cofactor biosynthesis; iron-sulfur cluster biosynthesis. Its function is as follows. Scaffold protein for the de novo synthesis of iron-sulfur (Fe-S) clusters within mitochondria, which is required for maturation of both mitochondrial and cytoplasmic [2Fe-2S] and [4Fe-4S] proteins. First, a [2Fe-2S] cluster is transiently assembled on the scaffold protein ISCU (ISU1, ISU2 or ISU3). In a second step, the cluster is released from ISCU, transferred to a glutaredoxin, followed by the formation of mitochondrial [2Fe-2S] proteins, the synthesis of [4Fe-4S] clusters and their target-specific insertion into the recipient apoproteins. Cluster assembly on ISCU depends on the function of the cysteine desulfurase complex NFS1-ISD11, which serves as the sulfur donor for cluster synthesis, the iron-binding protein frataxin as the putative iron donor, and the electron transfer chain comprised of ferredoxin reductase and ferredoxin, which receive their electrons from NADH. This is Iron-sulfur cluster assembly protein 2 (ISU2) from Arabidopsis thaliana (Mouse-ear cress).